Consider the following 586-residue polypeptide: Adenine deaminase (586 aa).

This sequence belongs to the metallo-dependent hydrolases superfamily. Adenine deaminase family. Mn(2+) serves as cofactor.

The enzyme catalyses adenine + H2O + H(+) = hypoxanthine + NH4(+). The chain is Adenine deaminase from Bdellovibrio bacteriovorus (strain ATCC 15356 / DSM 50701 / NCIMB 9529 / HD100).